A 55-amino-acid polypeptide reads, in one-letter code: ATP synthase F(0) complex subunit 8 (55 aa).

Residues Pro-8–Ile-24 form a helical membrane-spanning segment.

This sequence belongs to the ATPase protein 8 family. Component of the ATP synthase complex composed at least of ATP5F1A/subunit alpha, ATP5F1B/subunit beta, ATP5MC1/subunit c (homooctomer), MT-ATP6/subunit a, MT-ATP8/subunit 8, ATP5ME/subunit e, ATP5MF/subunit f, ATP5MG/subunit g, ATP5MK/subunit k, ATP5MJ/subunit j, ATP5F1C/subunit gamma, ATP5F1D/subunit delta, ATP5F1E/subunit epsilon, ATP5PF/subunit F6, ATP5PB/subunit b, ATP5PD/subunit d, ATP5PO/subunit OSCP. ATP synthase complex consists of a soluble F(1) head domain (subunits alpha(3) and beta(3)) - the catalytic core - and a membrane F(0) domain - the membrane proton channel (subunits c, a, 8, e, f, g, k and j). These two domains are linked by a central stalk (subunits gamma, delta, and epsilon) rotating inside the F1 region and a stationary peripheral stalk (subunits F6, b, d, and OSCP).

It is found in the mitochondrion membrane. Subunit 8, of the mitochondrial membrane ATP synthase complex (F(1)F(0) ATP synthase or Complex V) that produces ATP from ADP in the presence of a proton gradient across the membrane which is generated by electron transport complexes of the respiratory chain. ATP synthase complex consist of a soluble F(1) head domain - the catalytic core - and a membrane F(1) domain - the membrane proton channel. These two domains are linked by a central stalk rotating inside the F(1) region and a stationary peripheral stalk. During catalysis, ATP synthesis in the catalytic domain of F(1) is coupled via a rotary mechanism of the central stalk subunits to proton translocation. In vivo, can only synthesize ATP although its ATP hydrolase activity can be activated artificially in vitro. Part of the complex F(0) domain. The polypeptide is ATP synthase F(0) complex subunit 8 (Coturnix japonica (Japanese quail)).